Consider the following 60-residue polypeptide: UPF0434 protein YcaR (60 aa).

Belongs to the UPF0434 family.

This Escherichia coli O139:H28 (strain E24377A / ETEC) protein is UPF0434 protein YcaR.